Consider the following 188-residue polypeptide: MSIKSDKWIRRMAQEHGMIEPFVERQVRGEQDNRVISFGVSSYGYDVRCADEFKVFTNINSATVDPKNFDAGSFVDIKSDVCIIPPNSFALARTVEYFRIPRDVLTICLGKSTYARCGIIVNVTPLEPEWEGHVTLEFSNTTTLPAKIYANEGVAQMLFLQSDEECEVSYKDRGGKYQGQRGVTLPRT.

Residues 111–116 (KSTYAR), 135–137 (TLE), Q156, Y170, and Q180 contribute to the dCTP site. E137 serves as the catalytic Proton donor/acceptor.

The protein belongs to the dCTP deaminase family. As to quaternary structure, homotrimer.

It catalyses the reaction dCTP + H2O + H(+) = dUTP + NH4(+). The protein operates within pyrimidine metabolism; dUMP biosynthesis; dUMP from dCTP (dUTP route): step 1/2. In terms of biological role, catalyzes the deamination of dCTP to dUTP. This is dCTP deaminase from Pseudomonas putida (strain ATCC 700007 / DSM 6899 / JCM 31910 / BCRC 17059 / LMG 24140 / F1).